The primary structure comprises 446 residues: WD repeat domain phosphoinositide-interacting protein 1 (446 aa).

A Nuclear receptor interaction motif is present at residues 131 to 136 (LLKTVL). Residues 184–224 (AHEGTLAAITFNSSGSKLASASEKGTVIRVFSVPEGQKLYE) form a WD 1 repeat. The L/FRRG motif motif lies at 225–228 (FRRG). WD repeat units follow at residues 230 to 269 (KRYV…DSRP) and 312 to 351 (SGQK…GGEC). Residues 386 to 406 (ARPSTSAASTVPGYSEDGGAL) are disordered.

It belongs to the WD repeat PROPPIN family. In terms of assembly, interacts with androgen receptor (AR) and the estrogen receptors ESR1 and ESR2. Interacts with WIPI2. Interacts with WDR45. Interacts with ATG16L1. May interact with NUDC.

Its subcellular location is the golgi apparatus. It is found in the trans-Golgi network. The protein localises to the endosome. The protein resides in the cytoplasmic vesicle. It localises to the clathrin-coated vesicle. Its subcellular location is the preautophagosomal structure membrane. It is found in the cytoplasm. The protein localises to the cytoskeleton. Its function is as follows. Component of the autophagy machinery that controls the major intracellular degradation process by which cytoplasmic materials are packaged into autophagosomes and delivered to lysosomes for degradation. Plays an important role in starvation- and calcium-mediated autophagy, as well as in mitophagy. Functions downstream of the ULK1 and PI3-kinases that produce phosphatidylinositol 3-phosphate (PtdIns3P) on membranes of the endoplasmic reticulum once activated. Binds phosphatidylinositol 3-phosphate (PtdIns3P), and maybe other phosphoinositides including PtdIns3,5P2 and PtdIns5P, and is recruited to phagophore assembly sites at the endoplasmic reticulum membranes. There, it assists WIPI2 in the recruitment of ATG12-ATG5-ATG16L1, a complex that directly controls the elongation of the nascent autophagosomal membrane. Together with WDR45/WIPI4, promotes ATG2 (ATG2A or ATG2B)-mediated lipid transfer by enhancing ATG2-association with phosphatidylinositol 3-monophosphate (PI3P)-containing membranes. Involved in xenophagy of Staphylococcus aureus. Invading S.aureus cells become entrapped in autophagosome-like WIPI1 positive vesicles targeted for lysosomal degradation. Also plays a distinct role in controlling the transcription of melanogenic enzymes and melanosome maturation, a process that is distinct from starvation-induced autophagy. May also regulate the trafficking of proteins involved in the mannose-6-phosphate receptor (MPR) recycling pathway. This is WD repeat domain phosphoinositide-interacting protein 1 (Wipi1) from Mus musculus (Mouse).